A 408-amino-acid chain; its full sequence is Collagen and calcium-binding EGF domain-containing protein 1 (408 aa).

The N-terminal stretch at 1 to 35 is a signal peptide; that stretch reads MVPPPLPSRGGAAKRQLGKSLGPLLLLLALGHTWT. The EGF-like; calcium-binding domain maps to 135 to 176; sequence DIDECATSNTTLCAHICINTMGSYHCECREGYILEDDGRTCT. Intrachain disulfides connect C139–C151, C147–C160, and C162–C175. N143 carries an N-linked (GlcNAc...) asparagine glycan. N183 carries N-linked (GlcNAc...) asparagine glycosylation. Disordered regions lie at residues 246–335 and 361–408; these read YLPG…GPPG and HRTH…NFYP. Collagen-like domains lie at 247-292 and 302-335; these read LPGP…PMGP and GRRG…GPPG. The segment covering 272–281 has biased composition (pro residues); that stretch reads PGMPGPPGQP. A compositionally biased stretch (low complexity) spans 283–294; sequence PRGSMGPMGPSP. Positions 325 to 334 are enriched in pro residues; it reads PGPPGSPGPP. S387 carries an O-linked (Xyl...) (chondroitin sulfate) serine glycan. Residues 390 to 402 show a composition bias toward basic and acidic residues; that stretch reads DYSRRTEARDPEA.

This sequence belongs to the CCBE1 family.

It localises to the secreted. Required for lymphangioblast budding and angiogenic sprouting from venous endothelium during embryogenesis. This chain is Collagen and calcium-binding EGF domain-containing protein 1 (Ccbe1), found in Mus musculus (Mouse).